Reading from the N-terminus, the 95-residue chain is Secretoglobin family 2A member 2 (95 aa).

Residues 1–18 form the signal peptide; the sequence is MKLVFLFLLVTIPICCYA. N-linked (GlcNAc...) asparagine glycosylation is present at Asn35.

The protein belongs to the secretoglobin family. Lipophilin subfamily. As to quaternary structure, prostatein is composed of three different peptides called C1, C2 and C3. These form covalent C1:C3 (F) and C2:C3 (S) heterodimers whose non-covalent association forms tetrameric (C1:C3/C3:C2) prostatein molecules. In terms of tissue distribution, highly expressed in ventral prostate.

Its subcellular location is the secreted. Its function is as follows. Part of prostatein which is the major secretory glycoprotein of ventral prostate gland. Steroid-binding protein; can bind non-polar steroids, cholesterol and a group of small proline-rich peptides. This is Secretoglobin family 2A member 2 (Scgb2a2) from Rattus norvegicus (Rat).